Here is a 341-residue protein sequence, read N- to C-terminus: Cell division protein FtsQ (341 aa).

Residues 1–126 (MTETDEGAPV…VARGVVRGLK (126 aa)) lie on the Cytoplasmic side of the membrane. Residues 127–147 (TLFATVMFSIAGFGLGLALYV) traverse the membrane as a helical segment. The Extracellular portion of the chain corresponds to 148–341 (TPAMSVRNIV…VSSPDLPTVK (194 aa)). Residues 151–219 (MSVRNIVVTG…SALRITIVER (69 aa)) enclose the POTRA domain.

It belongs to the FtsQ/DivIB family. FtsQ subfamily.

It is found in the cell membrane. In terms of biological role, essential cell division protein. This Mycobacterium leprae (strain Br4923) protein is Cell division protein FtsQ.